Here is a 415-residue protein sequence, read N- to C-terminus: UDP-N-acetylglucosamine 1-carboxyvinyltransferase (415 aa).

A phosphoenolpyruvate-binding site is contributed by 22 to 23 (KN). Arg-92 contacts UDP-N-acetyl-alpha-D-glucosamine. Cys-116 acts as the Proton donor in catalysis. Cys-116 carries the 2-(S-cysteinyl)pyruvic acid O-phosphothioketal modification. Residues 121–125 (RPIDL), Asp-304, and Val-326 each bind UDP-N-acetyl-alpha-D-glucosamine.

It belongs to the EPSP synthase family. MurA subfamily.

The protein resides in the cytoplasm. The catalysed reaction is phosphoenolpyruvate + UDP-N-acetyl-alpha-D-glucosamine = UDP-N-acetyl-3-O-(1-carboxyvinyl)-alpha-D-glucosamine + phosphate. It participates in cell wall biogenesis; peptidoglycan biosynthesis. In terms of biological role, cell wall formation. Adds enolpyruvyl to UDP-N-acetylglucosamine. This chain is UDP-N-acetylglucosamine 1-carboxyvinyltransferase, found in Halothermothrix orenii (strain H 168 / OCM 544 / DSM 9562).